We begin with the raw amino-acid sequence, 174 residues long: MQLAQCETTSQFSAPVIREDYRDAMARLAAAVNIITTDGPSGRAGFTATAVCSVTDEPPTLLVCLNRSASAHPIVTANGQLCVNTLAGAQRDLSNLFGGKTPMAERFAAAQWSTGVTGSPLLDGATVSFDCRISHSASVGTHDILYCEVLAVYRRDSSDALVYFGRNYHGLSSS.

This sequence belongs to the non-flavoprotein flavin reductase family. RutF subfamily.

It catalyses the reaction FMNH2 + NAD(+) = FMN + NADH + 2 H(+). Catalyzes the reduction of FMN to FMNH2 which is used to reduce pyrimidine by RutA via the Rut pathway. This Stutzerimonas stutzeri (strain A1501) (Pseudomonas stutzeri) protein is FMN reductase (NADH) RutF.